The primary structure comprises 302 residues: Probable alpha-L-glutamate ligase (302 aa).

Residues 104 to 287 enclose the ATP-grasp domain; the sequence is MQLLSREGVG…VAGMIIEFIE (184 aa). ATP is bound by residues lysine 141, 178–179, aspartate 187, and 211–213; these read EF and RSN. The Mg(2+) site is built by aspartate 248, glutamate 260, and asparagine 262. Mn(2+) contacts are provided by aspartate 248, glutamate 260, and asparagine 262.

The protein belongs to the RimK family. It depends on Mg(2+) as a cofactor. Mn(2+) serves as cofactor.

The chain is Probable alpha-L-glutamate ligase from Halorhodospira halophila (strain DSM 244 / SL1) (Ectothiorhodospira halophila (strain DSM 244 / SL1)).